Consider the following 267-residue polypeptide: Sulfur carrier protein FdhD (267 aa).

The active-site Cysteine persulfide intermediate is the C108.

The protein belongs to the FdhD family.

It localises to the cytoplasm. Required for formate dehydrogenase (FDH) activity. Acts as a sulfur carrier protein that transfers sulfur from IscS to the molybdenum cofactor prior to its insertion into FDH. The protein is Sulfur carrier protein FdhD of Shouchella clausii (strain KSM-K16) (Alkalihalobacillus clausii).